Reading from the N-terminus, the 240-residue chain is 1-(5-phosphoribosyl)-5-[(5-phosphoribosylamino)methylideneamino] imidazole-4-carboxamide isomerase (240 aa).

D8 functions as the Proton acceptor in the catalytic mechanism. The active-site Proton donor is the D129.

It belongs to the HisA/HisF family.

The protein localises to the cytoplasm. The enzyme catalyses 1-(5-phospho-beta-D-ribosyl)-5-[(5-phospho-beta-D-ribosylamino)methylideneamino]imidazole-4-carboxamide = 5-[(5-phospho-1-deoxy-D-ribulos-1-ylimino)methylamino]-1-(5-phospho-beta-D-ribosyl)imidazole-4-carboxamide. It participates in amino-acid biosynthesis; L-histidine biosynthesis; L-histidine from 5-phospho-alpha-D-ribose 1-diphosphate: step 4/9. This chain is 1-(5-phosphoribosyl)-5-[(5-phosphoribosylamino)methylideneamino] imidazole-4-carboxamide isomerase, found in Listeria monocytogenes serotype 4b (strain CLIP80459).